The primary structure comprises 232 residues: Thrombin-like enzyme bothrombin (232 aa).

The Peptidase S1 domain maps to 1–223 (VIGGDECDIN…YLPWIQSIIA (223 aa)). Cystine bridges form between Cys7/Cys139, Cys26/Cys42, Cys74/Cys230, Cys118/Cys184, Cys150/Cys163, and Cys174/Cys199. Active-site charge relay system residues include His41 and Asp86. N-linked (GlcNAc...) asparagine glycans are attached at residues Asn98 and Asn146. Catalysis depends on Ser178, which acts as the Charge relay system. Asn225 is a glycosylation site (N-linked (GlcNAc...) asparagine).

It belongs to the peptidase S1 family. Snake venom subfamily. Monomer. Expressed by the venom gland.

It localises to the secreted. It carries out the reaction Selective cleavage of Arg-|-Xaa bond in fibrinogen, to form fibrin, and release fibrinopeptide A. The specificity of further degradation of fibrinogen varies with species origin of the enzyme.. Its activity is regulated as follows. Inhibited by diisopropylfluorophosphate (DFP), but not by hirudin. Functionally, thrombin-like snake venom serine protease that clots fibrinogen by releasing fibrinopeptide A from the alpha chain of fibrinogen (FGA), induces platelet aggregation through its interaction with GPIb (GP1BA/GP1BB), and activates factor VIII (F8). In Bothrops jararaca (Jararaca), this protein is Thrombin-like enzyme bothrombin.